Reading from the N-terminus, the 414-residue chain is Collagenase (414 aa).

This sequence belongs to the peptidase U32 family. In terms of assembly, homodimer. A metal cation is required as a cofactor.

Functionally, has collagenase activity. Hydrolyzes type I collagen. May play a role in virulence. This Porphyromonas gingivalis (strain ATCC BAA-308 / W83) protein is Collagenase (prtC).